Here is a 108-residue protein sequence, read N- to C-terminus: UPF0145 protein MADE_1007770 (108 aa).

This sequence belongs to the UPF0145 family.

This Alteromonas mediterranea (strain DSM 17117 / CIP 110805 / LMG 28347 / Deep ecotype) protein is UPF0145 protein MADE_1007770.